The sequence spans 970 residues: GEM-interacting protein (970 aa).

S19 carries the post-translational modification Phosphoserine. Disordered regions lie at residues 44 to 76 (PLLS…EGPV), 224 to 263 (SEDL…AQAK), and 377 to 478 (PLDI…ENGL). Residues 56–65 (PTATVTNEAS) are compositionally biased toward polar residues. 6 positions are modified to phosphoserine: S71, S231, S234, S243, S437, and S441. One can recognise an F-BAR domain in the interval 81 to 344 (EELDLRLIRT…CCAPFEPGQR (264 aa)). Over residues 231–246 (SQGSPEDSAPQASPGP) the composition is skewed to polar residues. The span at 459-472 (SSDDFEERDPDLGD) shows a compositional bias: acidic residues. A Phorbol-ester/DAG-type zinc finger spans residues 493 to 537 (THQLRRLRGPAKCRECEAFMVSGTECEECFLTCHKRCLETLLILC). Residues 554-757 (LQLPRDFPEE…FLIVHYEQIF (204 aa)) form the Rho-GAP domain. T660 bears the Phosphothreonine mark. Residues 762 to 878 (LPQATEPPPQ…PVKYPRGGVR (117 aa)) form a disordered region. Residues 766–778 (TEPPPQDSSPAPG) are compositionally biased toward pro residues. Residues 815-830 (EQHPTATPTEIPTPQS) are compositionally biased toward polar residues. Residues 831–844 (DQREDVAEDTKDGG) are compositionally biased toward basic and acidic residues. Positions 847 to 863 (VSSQGPEDSLLGTQSRG) are enriched in polar residues. 5 positions are modified to phosphoserine: S885, S907, S914, S919, and S923. The segment at 897-932 (ETPITSVPRGSLRGRGPSPAAASPEGSPLRRTPLPK) is disordered. Residues 910 to 923 (GRGPSPAAASPEGS) are compositionally biased toward low complexity.

Interacts with GEM through its N-terminal.

Stimulates, in vitro and in vivo, the GTPase activity of RhoA. This is GEM-interacting protein (GMIP) from Homo sapiens (Human).